The primary structure comprises 80 residues: Acyl carrier protein (80 aa).

One can recognise a Carrier domain in the interval 4–79; that stretch reads EAILEKVRSI…DAVKYIEDKQ (76 aa). Ser39 carries the O-(pantetheine 4'-phosphoryl)serine modification.

Belongs to the acyl carrier protein (ACP) family. 4'-phosphopantetheine is transferred from CoA to a specific serine of apo-ACP by AcpS. This modification is essential for activity because fatty acids are bound in thioester linkage to the sulfhydryl of the prosthetic group.

Its subcellular location is the cytoplasm. It participates in lipid metabolism; fatty acid biosynthesis. Functionally, carrier of the growing fatty acid chain in fatty acid biosynthesis. This Prochlorococcus marinus (strain MIT 9313) protein is Acyl carrier protein.